Here is a 202-residue protein sequence, read N- to C-terminus: Small ribosomal subunit protein uS5 (202 aa).

The 64-residue stretch at 50-113 (LKQELLNVNI…REAKLNLIPV (64 aa)) folds into the S5 DRBM domain.

This sequence belongs to the universal ribosomal protein uS5 family. In terms of assembly, part of the 30S ribosomal subunit. Contacts protein S4.

Functionally, with S4 and S12 plays an important role in translational accuracy. This Pyrobaculum arsenaticum (strain DSM 13514 / JCM 11321 / PZ6) protein is Small ribosomal subunit protein uS5.